A 158-amino-acid polypeptide reads, in one-letter code: 3-hydroxyacyl-[acyl-carrier-protein] dehydratase FabZ (158 aa).

Histidine 62 is a catalytic residue.

It belongs to the thioester dehydratase family. FabZ subfamily.

The protein resides in the cytoplasm. The catalysed reaction is a (3R)-hydroxyacyl-[ACP] = a (2E)-enoyl-[ACP] + H2O. Functionally, involved in unsaturated fatty acids biosynthesis. Catalyzes the dehydration of short chain beta-hydroxyacyl-ACPs and long chain saturated and unsaturated beta-hydroxyacyl-ACPs. The sequence is that of 3-hydroxyacyl-[acyl-carrier-protein] dehydratase FabZ from Novosphingobium aromaticivorans (strain ATCC 700278 / DSM 12444 / CCUG 56034 / CIP 105152 / NBRC 16084 / F199).